A 31-amino-acid chain; its full sequence is Cytochrome b6-f complex subunit 6 (31 aa).

A helical membrane pass occupies residues 4 to 24 (LLSYFGFLFAILTLTSVLFIG).

It belongs to the PetL family. The 4 large subunits of the cytochrome b6-f complex are cytochrome b6, subunit IV (17 kDa polypeptide, PetD), cytochrome f and the Rieske protein, while the 4 small subunits are PetG, PetL, PetM and PetN. The complex functions as a dimer.

The protein localises to the plastid. Its subcellular location is the chloroplast thylakoid membrane. In terms of biological role, component of the cytochrome b6-f complex, which mediates electron transfer between photosystem II (PSII) and photosystem I (PSI), cyclic electron flow around PSI, and state transitions. PetL is important for photoautotrophic growth as well as for electron transfer efficiency and stability of the cytochrome b6-f complex. This chain is Cytochrome b6-f complex subunit 6, found in Angiopteris evecta (Mule's foot fern).